Here is a 292-residue protein sequence, read N- to C-terminus: Hypersensitive-induced response protein 4 (292 aa).

Gly-2 carries the N-myristoyl glycine lipid modification.

In terms of assembly, self-interacts and forms heteromers. Interacts with NB-LRR class of R proteins before R proteins (e.g. RPS2 or RPM1) are activated by the effectors.

Its subcellular location is the cell membrane. This chain is Hypersensitive-induced response protein 4 (HIR4), found in Arabidopsis thaliana (Mouse-ear cress).